The sequence spans 411 residues: Dual-specificity RNA methyltransferase RlmN (411 aa).

The active-site Proton acceptor is E125. One can recognise a Radical SAM core domain in the interval 131 to 380 (EEGRGTLCIS…IRTPRGRDIL (250 aa)). A disulfide bridge connects residues C138 and C383. The [4Fe-4S] cluster site is built by C145, C149, and C152. Residues 209-210 (GE), S241, 263-265 (SLH), and N340 each bind S-adenosyl-L-methionine. The active-site S-methylcysteine intermediate is C383.

It belongs to the radical SAM superfamily. RlmN family. The cofactor is [4Fe-4S] cluster.

Its subcellular location is the cytoplasm. It carries out the reaction adenosine(2503) in 23S rRNA + 2 reduced [2Fe-2S]-[ferredoxin] + 2 S-adenosyl-L-methionine = 2-methyladenosine(2503) in 23S rRNA + 5'-deoxyadenosine + L-methionine + 2 oxidized [2Fe-2S]-[ferredoxin] + S-adenosyl-L-homocysteine. It catalyses the reaction adenosine(37) in tRNA + 2 reduced [2Fe-2S]-[ferredoxin] + 2 S-adenosyl-L-methionine = 2-methyladenosine(37) in tRNA + 5'-deoxyadenosine + L-methionine + 2 oxidized [2Fe-2S]-[ferredoxin] + S-adenosyl-L-homocysteine. In terms of biological role, specifically methylates position 2 of adenine 2503 in 23S rRNA and position 2 of adenine 37 in tRNAs. m2A2503 modification seems to play a crucial role in the proofreading step occurring at the peptidyl transferase center and thus would serve to optimize ribosomal fidelity. This chain is Dual-specificity RNA methyltransferase RlmN, found in Brucella suis biovar 1 (strain 1330).